A 279-amino-acid polypeptide reads, in one-letter code: Very long chain fatty acid elongase 1 (279 aa).

Residue M1 is modified to N-acetylmethionine. A run of 7 helical transmembrane segments spans residues 23-43, 61-81, 110-130, 137-154, 176-196, 201-221, and 231-251; these read PLMG…YFVL, FMIV…YEFL, VAWL…IFIL, VTFL…SWWW, VIMY…PYLW, MTAI…QYYF, and VIIH…SNFW. The short motif at 275-279 is the Di-lysine motif element; that stretch reads KVKAN.

This sequence belongs to the ELO family. ELOVL1 subfamily. As to quaternary structure, interacts with LASS2 and HSD17B12. Interacts with TECR. As to expression, ubiquitous.

It localises to the endoplasmic reticulum membrane. The catalysed reaction is a very-long-chain acyl-CoA + malonyl-CoA + H(+) = a very-long-chain 3-oxoacyl-CoA + CO2 + CoA. It catalyses the reaction eicosanoyl-CoA + malonyl-CoA + H(+) = 3-oxodocosanoyl-CoA + CO2 + CoA. It carries out the reaction (11Z)-eicosenoyl-CoA + malonyl-CoA + H(+) = 3-oxo-(13Z)-docosenoyl-CoA + CO2 + CoA. The enzyme catalyses docosanoyl-CoA + malonyl-CoA + H(+) = 3-oxotetracosanoyl-CoA + CO2 + CoA. The catalysed reaction is (13Z)-docosenoyl-CoA + malonyl-CoA + H(+) = 3-oxo-(15Z)-tetracosenoyl-CoA + CO2 + CoA. It catalyses the reaction tetracosanoyl-CoA + malonyl-CoA + H(+) = 3-oxohexacosanoyl-CoA + CO2 + CoA. It carries out the reaction hexacosanoyl-CoA + malonyl-CoA + H(+) = 3-oxooctacosanyol-CoA + CO2 + CoA. The enzyme catalyses octadecanoyl-CoA + malonyl-CoA + H(+) = 3-oxoeicosanoyl-CoA + CO2 + CoA. It functions in the pathway lipid metabolism; fatty acid biosynthesis. In terms of biological role, catalyzes the first and rate-limiting reaction of the four reactions that constitute the long-chain fatty acids elongation cycle. This endoplasmic reticulum-bound enzymatic process allows the addition of 2 carbons to the chain of long- and very long-chain fatty acids (VLCFAs) per cycle. Condensing enzyme that exhibits activity toward saturated and monounsaturated acyl-CoA substrates, with the highest activity towards C22:0 acyl-CoA. May participate in the production of both saturated and monounsaturated VLCFAs of different chain lengths that are involved in multiple biological processes as precursors of membrane lipids and lipid mediators. Important for saturated C24:0 and monounsaturated C24:1 sphingolipid synthesis. Indirectly inhibits RPE65 via production of VLCFAs. The polypeptide is Very long chain fatty acid elongase 1 (Homo sapiens (Human)).